Here is a 57-residue protein sequence, read N- to C-terminus: Kunitz-type serine protease inhibitor (57 aa).

The BPTI/Kunitz inhibitor domain occupies 5 to 55 (CELPAAKGLCKAHKPAFYYNKDSHRCQKFIYGGCGGNANRFRTIDECNRTC). 3 disulfide bridges follow: Cys5/Cys55, Cys14/Cys38, and Cys30/Cys51.

This sequence belongs to the venom Kunitz-type family. Expressed by the venom gland.

It is found in the secreted. In terms of biological role, serine protease inhibitor that inhibits trypsin (Ki=0.0035 nM). The polypeptide is Kunitz-type serine protease inhibitor (Naja naja (Indian cobra)).